Consider the following 67-residue polypeptide: MKTKDFRDMTDEELLKEIDGFKTELFNLRFQLATGQLDNPARIREVRKGIARGKTILRERELKINRA.

The protein belongs to the universal ribosomal protein uL29 family.

This chain is Large ribosomal subunit protein uL29, found in Desulfitobacterium hafniense (strain Y51).